The chain runs to 1002 residues: Isoleucine--tRNA ligase (1002 aa).

A 'HIGH' region motif is present at residues 70–80 (PYANGNIHIGH). E630 lines the L-isoleucyl-5'-AMP pocket. The short motif at 671–675 (KMSKS) is the 'KMSKS' region element. Residue K674 coordinates ATP.

This sequence belongs to the class-I aminoacyl-tRNA synthetase family. IleS type 1 subfamily. In terms of assembly, monomer.

The protein resides in the cytoplasm. The catalysed reaction is tRNA(Ile) + L-isoleucine + ATP = L-isoleucyl-tRNA(Ile) + AMP + diphosphate. Functionally, catalyzes the attachment of isoleucine to tRNA(Ile). As IleRS can inadvertently accommodate and process structurally similar amino acids such as valine, to avoid such errors it has two additional distinct tRNA(Ile)-dependent editing activities. One activity is designated as 'pretransfer' editing and involves the hydrolysis of activated Val-AMP. The other activity is designated 'posttransfer' editing and involves deacylation of mischarged Val-tRNA(Ile). In Bradyrhizobium diazoefficiens (strain JCM 10833 / BCRC 13528 / IAM 13628 / NBRC 14792 / USDA 110), this protein is Isoleucine--tRNA ligase.